Here is a 368-residue protein sequence, read N- to C-terminus: Caffeine synthase 3 (368 aa).

Tyrosine 23 is an S-adenosyl-L-homocysteine binding site. Threonine 30 is a caffeine binding site. 6 residues coordinate S-adenosyl-L-homocysteine: cysteine 65, asparagine 70, aspartate 102, leucine 103, serine 137, and phenylalanine 138. Residues tyrosine 155, histidine 158, and tryptophan 159 each coordinate caffeine. Residue asparagine 176 coordinates Mg(2+). Residue arginine 224 coordinates caffeine. The Mg(2+) site is built by aspartate 262, phenylalanine 264, and asparagine 265. Phenylalanine 320 contributes to the caffeine binding site.

The protein belongs to the methyltransferase superfamily. Type-7 methyltransferase family. Mg(2+) serves as cofactor.

The catalysed reaction is theobromine + S-adenosyl-L-methionine = caffeine + S-adenosyl-L-homocysteine + H(+). The enzyme catalyses 7-methylxanthine + S-adenosyl-L-methionine = theobromine + S-adenosyl-L-homocysteine + H(+). The protein operates within alkaloid biosynthesis. Involved in the biosynthesis of caffeine. Catalyzes the conversion of 7-methylxanthine (7mX) to theobromine and of theobromine to caffeine. The protein is Caffeine synthase 3 of Camellia sinensis (Tea plant).